A 420-amino-acid chain; its full sequence is Tyrosine--tRNA ligase (420 aa).

Y36 contacts L-tyrosine. A 'HIGH' region motif is present at residues 41–50; the sequence is PTADSLHIGH. The L-tyrosine site is built by Y170 and Q174. A 'KMSKS' region motif is present at residues 231-235; that stretch reads KFGKS. An ATP-binding site is contributed by K234. The region spanning 353 to 420 is the S4 RNA-binding domain; it reads SNIIDVLIET…KKKYFMVNYK (68 aa).

The protein belongs to the class-I aminoacyl-tRNA synthetase family. TyrS type 1 subfamily. Homodimer.

It localises to the cytoplasm. The catalysed reaction is tRNA(Tyr) + L-tyrosine + ATP = L-tyrosyl-tRNA(Tyr) + AMP + diphosphate + H(+). Functionally, catalyzes the attachment of tyrosine to tRNA(Tyr) in a two-step reaction: tyrosine is first activated by ATP to form Tyr-AMP and then transferred to the acceptor end of tRNA(Tyr). This Staphylococcus haemolyticus (strain JCSC1435) protein is Tyrosine--tRNA ligase.